The primary structure comprises 408 residues: NADH-quinone oxidoreductase subunit H (408 aa).

9 helical membrane passes run 18-38, 84-104, 124-144, 165-185, 198-218, 261-281, 288-308, 321-341, and 353-373; these read LAKA…AILI, PIYL…FSVI, LPVA…GIVL, VVSY…YAGT, TWFV…MVGE, SALA…FNLI, WWPL…YFWL, MALG…VVAI, and WAAW…WGLA. Positions 381–408 are disordered; the sequence is VQPPPPQSTGAYPVPPLPSVGTKETADA. The segment covering 382–398 has biased composition (pro residues); that stretch reads QPPPPQSTGAYPVPPLP.

Belongs to the complex I subunit 1 family. As to quaternary structure, NDH-1 is composed of 14 different subunits. Subunits NuoA, H, J, K, L, M, N constitute the membrane sector of the complex.

The protein localises to the cell membrane. The catalysed reaction is a quinone + NADH + 5 H(+)(in) = a quinol + NAD(+) + 4 H(+)(out). Its function is as follows. NDH-1 shuttles electrons from NADH, via FMN and iron-sulfur (Fe-S) centers, to quinones in the respiratory chain. The immediate electron acceptor for the enzyme in this species is believed to be menaquinone. Couples the redox reaction to proton translocation (for every two electrons transferred, four hydrogen ions are translocated across the cytoplasmic membrane), and thus conserves the redox energy in a proton gradient. This subunit may bind ubiquinone. This chain is NADH-quinone oxidoreductase subunit H, found in Mycolicibacterium smegmatis (strain ATCC 700084 / mc(2)155) (Mycobacterium smegmatis).